A 329-amino-acid polypeptide reads, in one-letter code: ATPase ASNA1 homolog 1 (329 aa).

26-33 (KGGVGKTT) contacts ATP. Asp-55 is an active-site residue. 2 residues coordinate ATP: Glu-235 and Asn-262. Residues Cys-271 and Cys-274 each coordinate Zn(2+).

Belongs to the arsA ATPase family. In terms of assembly, homodimer.

It is found in the cytoplasm. The protein localises to the endoplasmic reticulum. Its function is as follows. ATPase required for the post-translational delivery of tail-anchored (TA) proteins to the endoplasmic reticulum. Recognizes and selectively binds the transmembrane domain of TA proteins in the cytosol. This complex then targets to the endoplasmic reticulum by membrane-bound receptors, where the tail-anchored protein is released for insertion. This process is regulated by ATP binding and hydrolysis. ATP binding drives the homodimer towards the closed dimer state, facilitating recognition of newly synthesized TA membrane proteins. ATP hydrolysis is required for insertion. Subsequently, the homodimer reverts towards the open dimer state, lowering its affinity for the membrane-bound receptor, and returning it to the cytosol to initiate a new round of targeting. The polypeptide is ATPase ASNA1 homolog 1 (Paramecium tetraurelia).